Here is a 469-residue protein sequence, read N- to C-terminus: Hydrogen cyanide synthase subunit HcnB (469 aa).

In terms of assembly, heterotrimer of HcnA, HcnB and HcnC.

The protein resides in the cell membrane. It catalyses the reaction glycine + 2 A = hydrogen cyanide + 2 AH2 + CO2. In terms of biological role, a three-component membrane-bound flavoenzyme that catalyzes the formation of hydrogen cyanide, a secondary metabolite, by transfer of electrons to a cyanide-resistant branch of the aerobic respiratory chain. Contributes to suppression of black root rot of tobacco. This Pseudomonas protegens (strain DSM 19095 / LMG 27888 / CFBP 6595 / CHA0) protein is Hydrogen cyanide synthase subunit HcnB.